A 595-amino-acid polypeptide reads, in one-letter code: Elongation factor 4 2 (595 aa).

The 184-residue stretch at 4–187 (SHIRNFAIIA…AIKQRLPAPQ (184 aa)) folds into the tr-type G domain. Residues 16–21 (DHGKST) and 133–136 (NKVD) contribute to the GTP site.

The protein belongs to the TRAFAC class translation factor GTPase superfamily. Classic translation factor GTPase family. LepA subfamily.

The protein localises to the cell membrane. The enzyme catalyses GTP + H2O = GDP + phosphate + H(+). Required for accurate and efficient protein synthesis under certain stress conditions. May act as a fidelity factor of the translation reaction, by catalyzing a one-codon backward translocation of tRNAs on improperly translocated ribosomes. Back-translocation proceeds from a post-translocation (POST) complex to a pre-translocation (PRE) complex, thus giving elongation factor G a second chance to translocate the tRNAs correctly. Binds to ribosomes in a GTP-dependent manner. This chain is Elongation factor 4 2, found in Lactiplantibacillus plantarum (strain ATCC BAA-793 / NCIMB 8826 / WCFS1) (Lactobacillus plantarum).